Here is a 251-residue protein sequence, read N- to C-terminus: Regulator of G-protein signaling 7-binding protein B (251 aa).

The tract at residues methionine 1–arginine 43 is disordered. The span at serine 25 to arginine 43 shows a compositional bias: basic and acidic residues. S-palmitoyl cysteine attachment occurs at residues cysteine 246 and cysteine 247.

Belongs to the RGS7BP/RGS9BP family. Post-translationally, palmitoylated. Undergoes rapid palmitoylation turnover. Palmitoylation regulates the cell membrane and nuclear shuttling and the regulation of GPCR signaling. Upon depalmitoylation, it is targeted from the plasma membrane into the nucleus. GPCR signaling inhibits depalmitoylation and promotes localization to the plasma membrane.

It is found in the nucleus. The protein resides in the cytoplasm. The protein localises to the cell membrane. In terms of biological role, regulator of G protein-coupled receptor (GPCR) signaling. Regulatory subunit of the R7-Gbeta5 complexes that acts by controlling the subcellular location of the R7-Gbeta5 complexes. When palmitoylated, it targets the R7-Gbeta5 complexes to the plasma membrane, leading to inhibit G protein alpha subunits. When it is unpalmitoylated, the R7-Gbeta5 complexes undergo a nuclear/cytoplasmic shuttling. In Danio rerio (Zebrafish), this protein is Regulator of G-protein signaling 7-binding protein B (rgs7bpb).